Reading from the N-terminus, the 188-residue chain is MTIKSDKWIRRMAQEHGMIEPFVERQVRGADDSRVISYGVSSYGYDVRCAAEFKVFTNIHSAVVDPKNFDEKSFVDINSDVCIIPPNSFALARTVEYFRIPRDVLTICLGKSTYARCGIIVNVTPLEPEWEGHVTLEFSNTTNLPAKIYANEGVAQMLFLQSDEACEVSYKDRGGKYQGQRGVTLPKA.

DCTP is bound by residues 111–116 (KSTYAR), 135–137 (TLE), Q156, Y170, and Q180. E137 serves as the catalytic Proton donor/acceptor.

Belongs to the dCTP deaminase family. Homotrimer.

It carries out the reaction dCTP + H2O + H(+) = dUTP + NH4(+). It functions in the pathway pyrimidine metabolism; dUMP biosynthesis; dUMP from dCTP (dUTP route): step 1/2. Catalyzes the deamination of dCTP to dUTP. This Pseudomonas aeruginosa (strain UCBPP-PA14) protein is dCTP deaminase.